Reading from the N-terminus, the 327-residue chain is GTP 3',8-cyclase (327 aa).

The 226-residue stretch at 7–232 (HHDRQFRYLR…IKRDRTAGPA (226 aa)) folds into the Radical SAM core domain. Residue Arg16 participates in GTP binding. Cys23 and Cys27 together coordinate [4Fe-4S] cluster. Residue Tyr29 participates in S-adenosyl-L-methionine binding. Residue Cys30 coordinates [4Fe-4S] cluster. Position 66 (Arg66) interacts with GTP. Position 70 (Gly70) interacts with S-adenosyl-L-methionine. Thr97 lines the GTP pocket. Residue Ser121 participates in S-adenosyl-L-methionine binding. Lys158 is a GTP binding site. Met192 contributes to the S-adenosyl-L-methionine binding site. [4Fe-4S] cluster contacts are provided by Cys255 and Cys258. 260–262 (RLR) is a binding site for GTP. Cys272 is a binding site for [4Fe-4S] cluster.

Belongs to the radical SAM superfamily. MoaA family. Monomer and homodimer. It depends on [4Fe-4S] cluster as a cofactor.

The catalysed reaction is GTP + AH2 + S-adenosyl-L-methionine = (8S)-3',8-cyclo-7,8-dihydroguanosine 5'-triphosphate + 5'-deoxyadenosine + L-methionine + A + H(+). It functions in the pathway cofactor biosynthesis; molybdopterin biosynthesis. Catalyzes the cyclization of GTP to (8S)-3',8-cyclo-7,8-dihydroguanosine 5'-triphosphate. This Synechococcus elongatus (strain ATCC 33912 / PCC 7942 / FACHB-805) (Anacystis nidulans R2) protein is GTP 3',8-cyclase.